The primary structure comprises 1215 residues: MPRRPRRNAKTSDKAEDAQTLVAPAANASVSSTVNTTTSPTLAAGNESQQRAGIDPNQAGSAGVGDAAPSSRVDNDGDVITRPTSDSIAAIANATKPAAVINNAQATALVPTSNPHAYRCNVCNAEFPSMSAMTEHLRTSHRDEPSTLLATPVINAAIQAFLQAWDGLRLLAPDVSSEALSKYLDSTVDSSPDLIVEDQGLCTSFMLIDNVPASHLSPELIGFTWFMQMYQMTPPLPEGAVNRIVCMTNWASLGDPSRGIEVRLPPPTDNTVHAYKTVLSQGYVASSQFSPLTFRANTLLMLTQFVLSNLKINKSSTFTSDVTTLTVGRMICSFEARPELLALAYPGRAVLPVNTKNAQFLATAIPDRIGRIDRANLIGGEVSASVECMELCDSLTLYIRENYLMLLRSMHQDPTRIVQIVNECARNLLNSSIPVNLRPSILCPWFASTADLRLQQAIHLVNISSNTAAALPQVEALSSLLRSVTPLVLNPTILTNAITTISESTTQTISPISEILRLLSPTGNDYAAFWKCIASWAYNGLVQTVLSEDAFPDSSQSITHLPSMWKCMLLTLAAPMTSDPHSPVKVFMSLANLLAQPEPIVINVDGMHQTTPASQFSHPGVWPPGFINPAQIPVAQAPLLRAFADHIHANWPQPSDFEYGSAAQGSGNLFIPPNRMVYPWPNAPLPRMTVAATFDSAMSQWISTTIAFFIRVVNAPIMAPTVNDLTRRTITGVLTAMRQVKTMTPFYIQHMCPTELAVLGSITLVPPFQVPFTRLVQNDAITNVLVARVDPTQRGDAAVDIRATHATFSAALPVDPASIVVAMLCGQTPTNLIPSHHYGKAFAPLFTSNAMFTRNQRAVITREALVCARSIVAQCQDDGFNVPRPLAGLRQFDITSAAAAEIWHAVNDAFKTAFDIDGALLDGMGLYGDPRIADISVAYLQYDGRVTREHVPPDQSFIHRALLTTENTFLAEMNLFNVGAGDIFLIQTPTNGNWAPMVPVAHPPFARGGPNVNVVGNHGTLAMRPNGLEPQLIDNAGVPRDIAGDWIYPIDVLQVSVSTFRDYVWPLVVAGRVRVRIEIPHYVYTTHYHQPQTTFTDAQLVETWLAGIDPTGIPPIPFSIPIPQVGACITSRRVYHVFAAQNNNNSLFSTNSSSIATVFGEDAGVSPARWPALVDPNYQFGTNELPNRITLYGSLFRYNFTYPSLSGVMFMRSAE.

Positions 1-81 are disordered; sequence MPRRPRRNAK…RVDNDGDVIT (81 aa). Residues 21–44 are compositionally biased toward low complexity; sequence LVAPAANASVSSTVNTTTSPTLAA. The segment at 118–141 adopts a C2H2-type zinc-finger fold; sequence YRCNVCNAEFPSMSAMTEHLRTSH.

The protein belongs to the turreted BTV-fold inner capsid family. As to quaternary structure, homodecamer; each decamer is made up of two conformers of VP2, called VP2A and VP2B. 12 homodecamers assemble to form an icosahedral capsid. Interacts with VP6.

It is found in the virion. Inner capsid protein that self-assembles to form an icosahedral capsid with a T=2 symmetry, which consists of 120 copies of VP2, with channels at each of its five-fold vertices. This capsid constitutes the innermost concentric layer of the viral mature particle. This chain is Inner capsid protein VP3 (S3), found in Ctenopharyngodon idella (Grass carp).